The sequence spans 44 residues: Mu-conotoxin-like Cal 12.1.2f (44 aa).

4 cysteine pairs are disulfide-bonded: Cys-3–Cys-15, Cys-10–Cys-27, Cys-17–Cys-32, and Cys-26–Cys-38. Trp-16 is modified (6'-bromotryptophan). Residue Pro-22 is modified to 4-hydroxyproline. 2 positions are modified to 6'-bromotryptophan: Trp-36 and Trp-37. At Pro-39 the chain carries 4-hydroxyproline. The residue at position 43 (Trp-43) is a 6'-bromotryptophan.

Expressed by the venom duct.

It localises to the secreted. Its function is as follows. Mu-conotoxins block voltage-gated sodium channels. This toxin reversibly blocks voltage-gated sodium channel in cephalopods, with no alteration in the voltage dependence of sodium conductance or on the kinetics of inactivation. In Californiconus californicus (California cone), this protein is Mu-conotoxin-like Cal 12.1.2f.